The chain runs to 426 residues: GATA type zinc finger protein asd-4 (426 aa).

Residues 16 to 40 form a GATA-type zinc finger; the sequence is CQNCATSTTPLWRRDEMGQVLCNAC. Disordered regions lie at residues 70–143 and 159–178; these read RPDL…NPHI and PGFG…MNGE. The span at 104 to 113 shows a compositional bias: low complexity; the sequence is PNNPAAAARR. Residues 128 to 138 show a composition bias toward polar residues; it reads SPVSRTGTPNV. Residues 182–292 are a coiled coil; it reads QTHEQLLAAN…QDNGRHKKIR (111 aa). The span at 306 to 318 shows a compositional bias: low complexity; the sequence is VEPQQPEQQQPAP. The segment at 306-426 is disordered; that stretch reads VEPQQPEQQQ…PVEEAPKAES (121 aa). The span at 335-353 shows a compositional bias: pro residues; sequence APAPAPEAAPEQAPAPAPE. Residues 354–419 show a composition bias toward low complexity; that stretch reads PVQEQAQEPE…SEPPTTAPVE (66 aa).

Homotetramer.

Its subcellular location is the nucleus. Its function is as follows. Transcriptional regulator that functions in sexual development; disruption of asd-4 gene results in agenesis of ascus and ascospore with macroscopically normal fruiting body formation. The GATA-type zinc finger domain binds to DNA sequences from its own promoter region. The protein is GATA type zinc finger protein asd-4 (asd-4) of Neurospora crassa (strain ATCC 24698 / 74-OR23-1A / CBS 708.71 / DSM 1257 / FGSC 987).